The primary structure comprises 731 residues: Zinc finger protein 615 (731 aa).

Residues 8 to 79 enclose the KRAB domain; sequence LTLEDVAVDF…EDEIYSRICS (72 aa). 19 consecutive C2H2-type zinc fingers follow at residues 204 to 226, 232 to 254, 260 to 282, 288 to 310, 316 to 338, 344 to 366, 372 to 394, 400 to 422, 428 to 450, 456 to 478, 484 to 506, 512 to 534, 540 to 562, 568 to 590, 596 to 618, 624 to 646, 652 to 674, 680 to 702, and 708 to 730; these read HVCS…QRVH, HVCS…QRTH, YECT…QKTH, YTCS…QRTH, HGCS…QKTH, YICS…HRTH, FICN…QQTH, YKCN…QRTH, YVCT…QRTH, YICN…QRTH, YVCG…QRTH, YICN…RRTH, YVCS…QRTH, YICN…QQTH, YKCN…QRFH, FACT…QRIH, YKCS…QRKH, and YGCS…RRIH.

It belongs to the krueppel C2H2-type zinc-finger protein family.

It is found in the nucleus. Its function is as follows. May be involved in transcriptional regulation. This chain is Zinc finger protein 615 (ZNF615), found in Homo sapiens (Human).